The following is a 910-amino-acid chain: Seizure 6-like protein 2 (910 aa).

The N-terminal stretch at 1-27 (MGTPRAQHPPPPQLLFLILLSCPWIQG) is a signal peptide. The Extracellular segment spans residues 28–844 (LPLKEEEILP…DPSRQLEGGN (817 aa)). The tract at residues 41–48 (SETPTVAS) is O-glycosylated at one site. Residues 65 to 152 (EMGYLPGSDR…PLGPEGGEEE (88 aa)) form a disordered region. Pro residues predominate over residues 123–145 (LTPPPGTTAPPPPSPASPGPPLG). A disulfide bridge connects residues Cys-173 and Cys-202. Positions 173 to 286 (CNNNISEGEG…GGFRIHYQAY (114 aa)) constitute a CUB 1 domain. Asn-176, Asn-222, and Asn-247 each carry an N-linked (GlcNAc...) asparagine glycan. The Sushi 1 domain occupies 288 to 347 (LSCGFPPRPAHGDVSVTDLHPGGTATFHCDSGYQLQGEETLICLNGTRPSWNGETPSCMA). 6 disulfide bridges follow: Cys-290–Cys-330, Cys-316–Cys-345, Cys-349–Cys-376, Cys-464–Cys-508, Cys-491–Cys-523, and Cys-527–Cys-553. N-linked (GlcNAc...) asparagine glycosylation is found at Asn-332, Asn-355, Asn-373, Asn-473, and Asn-517. Residues 349-459 (CGGTIHNATL…LLLSLRFEAF (111 aa)) form the CUB 2 domain. Residues 462–525 (DRCFAPFLAH…WNDTEPACKA (64 aa)) enclose the Sushi 2 domain. The CUB 3 domain occupies 527–638 (CGGELSEPAG…QGFVLHFKEV (112 aa)). Asn-641 is a glycosylation site (N-linked (GlcNAc...) asparagine). Sushi domains lie at 642 to 701 (DTCP…ACQK), 703 to 766 (MTCA…KCAL), and 769 to 830 (EPCL…LCKV). Cystine bridges form between Cys-644/Cys-686, Cys-672/Cys-699, Cys-705/Cys-747, Cys-733/Cys-764, Cys-771/Cys-813, and Cys-799/Cys-828. A helical membrane pass occupies residues 845 to 865 (LALAILLPLGLVIVLGSGVYI). The Cytoplasmic segment spans residues 866-910 (YYTKLQGKSLFGFSGSHSYSPITVESDFSNPLYEAGDTREYEVSI).

It belongs to the SEZ6 family. In terms of processing, O-glycosylated with core 1 or possibly core 8 glycans.

Its subcellular location is the cell membrane. The protein localises to the endoplasmic reticulum membrane. Its function is as follows. May contribute to specialized endoplasmic reticulum functions in neurons. The polypeptide is Seizure 6-like protein 2 (SEZ6L2) (Homo sapiens (Human)).